Reading from the N-terminus, the 121-residue chain is Holo-[acyl-carrier-protein] synthase (121 aa).

The Mg(2+) site is built by D8 and E58.

This sequence belongs to the P-Pant transferase superfamily. AcpS family. It depends on Mg(2+) as a cofactor.

The protein localises to the cytoplasm. It carries out the reaction apo-[ACP] + CoA = holo-[ACP] + adenosine 3',5'-bisphosphate + H(+). Functionally, transfers the 4'-phosphopantetheine moiety from coenzyme A to a Ser of acyl-carrier-protein. The sequence is that of Holo-[acyl-carrier-protein] synthase from Bacillus velezensis (strain DSM 23117 / BGSC 10A6 / LMG 26770 / FZB42) (Bacillus amyloliquefaciens subsp. plantarum).